We begin with the raw amino-acid sequence, 208 residues long: MQFPDRLIQHFDSALRVMSGVSVAGRPNPAAKVADGDLDSAQRRHSAGLMRVNHVGEVCAQALYQAQAQFARSPAIRQQLLLAGREEEDHLAWTAERLRELGSRPSLLNPLWYAGAFALGTVAATLGDARSLGFVVETERQVEAHLNQHLSSLPPQDAKSLAIVKQMSTDEAEHGAAAHALGAQTVPPLAQMGMQAMAKVMTSTAYYL.

Fe cation contacts are provided by E57, E87, H90, E139, E171, and H174.

This sequence belongs to the COQ7 family. Fe cation serves as cofactor.

It is found in the cell membrane. The catalysed reaction is a 5-methoxy-2-methyl-3-(all-trans-polyprenyl)benzene-1,4-diol + AH2 + O2 = a 3-demethylubiquinol + A + H2O. It participates in cofactor biosynthesis; ubiquinone biosynthesis. Catalyzes the hydroxylation of 2-nonaprenyl-3-methyl-6-methoxy-1,4-benzoquinol during ubiquinone biosynthesis. This is 3-demethoxyubiquinol 3-hydroxylase from Janthinobacterium sp. (strain Marseille) (Minibacterium massiliensis).